Consider the following 302-residue polypeptide: Sulfate adenylyltransferase subunit 2 (302 aa).

It belongs to the PAPS reductase family. CysD subfamily. In terms of assembly, heterodimer composed of CysD, the smaller subunit, and CysN.

It catalyses the reaction sulfate + ATP + H(+) = adenosine 5'-phosphosulfate + diphosphate. Its pathway is sulfur metabolism; hydrogen sulfide biosynthesis; sulfite from sulfate: step 1/3. With CysN forms the ATP sulfurylase (ATPS) that catalyzes the adenylation of sulfate producing adenosine 5'-phosphosulfate (APS) and diphosphate, the first enzymatic step in sulfur assimilation pathway. APS synthesis involves the formation of a high-energy phosphoric-sulfuric acid anhydride bond driven by GTP hydrolysis by CysN coupled to ATP hydrolysis by CysD. The polypeptide is Sulfate adenylyltransferase subunit 2 (Escherichia coli O81 (strain ED1a)).